A 583-amino-acid chain; its full sequence is MKLLHVFLLFLCFHLRFCKVTYTSQEDLVEKKCLAKKYTHLSCDKVFCQPWQRCIEGTCVCKLPYQCPKNGTAVCATNRRSFPTYCQQKSLECLHPGTKFLNNGTCTAEGKFSVSLKHGNTDSEGIVEVKLVDQDKTMFICKSSWSMREANVACLDLGFQQGADTQRRFKLSDLSINSTECLHVHCRGLETSLAECTFTKRRTMGYQDFADVVCYTQKADSPMDDFFQCVNGKYISQMKACDGINDCGDQSDELCCKACQGKGFHCKSGVCIPSQYQCNGEVDCITGEDEVGCAGFASVTQEETEILTADMDAERRRIKSLLPKLSCGVKNRMHIRRKRIVGGKRAQLGDLPWQVAIKDASGITCGGIYIGGCWILTAAHCLRASKTHRYQIWTTVVDWIHPDLKRIVIEYVDRIIFHENYNAGTYQNDIALIEMKKDGNKKDCELPRSIPACVPWSPYLFQPNDTCIVSGWGREKDNERVFSLQWGEVKLISNCSKFYGNRFYEKEMECAGTYDGSIDACKGDSGGPLVCMDANNVTYVWGVVSWGENCGKPEFPGVYTKVANYFDWISYHVGRPFISQYNV.

The signal sequence occupies residues 1 to 18 (MKLLHVFLLFLCFHLRFC). Intrachain disulfides connect Cys-33–Cys-255, Cys-43–Cys-54, Cys-48–Cys-59, Cys-61–Cys-93, Cys-67–Cys-86, Cys-75–Cys-106, Cys-141–Cys-181, Cys-154–Cys-214, Cys-186–Cys-196, Cys-229–Cys-247, Cys-241–Cys-256, Cys-259–Cys-271, Cys-266–Cys-284, Cys-278–Cys-293, Cys-327–Cys-453, Cys-365–Cys-381, and Cys-373–Cys-444. The region spanning 55–108 (IEGTCVCKLPYQCPKNGTAVCATNRRSFPTYCQQKSLECLHPGTKFLNNGTCTA) is the Kazal-like domain. A glycan (N-linked (GlcNAc...) asparagine) is linked at Asn-70. The N-linked (GlcNAc...) (complex) asparagine glycan is linked to Asn-103. One can recognise an SRCR domain in the interval 114 to 212 (VSLKHGNTDS…TMGYQDFADV (99 aa)). Asn-177 carries an N-linked (GlcNAc...) asparagine glycan. 2 consecutive LDL-receptor class A domains span residues 213-257 (VCYT…LCCK) and 258-294 (ACQG…VGCA). Ca(2+) contacts are provided by Lys-239, Asp-242, Ile-244, Asp-246, Asp-252, and Glu-253. Ca(2+) contacts are provided by Tyr-276, Asn-279, Glu-281, Asp-283, Asp-289, and Glu-290. The 235-residue stretch at 340-574 (IVGGKRAQLG…YFDWISYHVG (235 aa)) folds into the Peptidase S1 domain. Catalysis depends on charge relay system residues His-380 and Asp-429. N-linked (GlcNAc...) asparagine glycans are attached at residues Asn-464 and Asn-494. Disulfide bonds link Cys-467/Cys-531, Cys-495/Cys-510, and Cys-521/Cys-550. Ser-525 serves as the catalytic Charge relay system. Asn-536 carries N-linked (GlcNAc...) asparagine glycosylation.

The protein belongs to the peptidase S1 family. As to quaternary structure, heterodimer of a light and heavy chains; disulfide-linked. The fully processed and mature protein circulates as a zymogen, and is allosterically activated by substrate-induced remodeling of the active site. Interacts with C3b. Interacts with complement factor H. (Microbial infection) Interacts with Staphylococcus aureus clumping factor A/ClfA; this interaction enhances cleavage of C3b into iC3b by CFI. Expressed in the liver by hepatocytes. Also present in other cells such as monocytes, fibroblasts or keratinocytes.

Its subcellular location is the secreted. It localises to the extracellular space. It carries out the reaction Inactivates complement subcomponents C3b, iC3b and C4b by proteolytic cleavage.. Trypsin-like serine protease that plays an essential role in regulating the immune response by controlling all complement pathways. Inhibits these pathways by cleaving three peptide bonds in the alpha-chain of C3b and two bonds in the alpha-chain of C4b thereby inactivating these proteins. Essential cofactors for these reactions include factor H and C4BP in the fluid phase and membrane cofactor protein/CD46 and CR1 on cell surfaces. The presence of these cofactors on healthy cells allows degradation of deposited C3b by CFI in order to prevent undesired complement activation, while in apoptotic cells or microbes, the absence of such cofactors leads to C3b-mediated complement activation and subsequent opsonization. This chain is Complement factor I (CFI), found in Homo sapiens (Human).